An 897-amino-acid polypeptide reads, in one-letter code: Probable basic-leucine zipper transcription factor R (897 aa).

Disordered regions lie at residues 38 to 88 (DDNI…NIET) and 128 to 198 (YQQR…NSNS). Over residues 44-75 (NNNNNNNNNNNNNNNNNNNNNNNNNNNNNNNN) the composition is skewed to low complexity. The span at 76-88 (IGSPQIMNENIET) shows a compositional bias: polar residues. Residues 94–137 (QYLERLQSIQQQQHQCQTQIQQQLQNYQQQYEDQYQQRQQQYQD) adopt a coiled-coil conformation. A compositionally biased stretch (low complexity) spans 128 to 140 (YQQRQQQYQDQYQ). The segment covering 141 to 157 (KPYSSPPLNFNSIPPIT) has biased composition (polar residues). Low complexity predominate over residues 158 to 198 (NNNNNNNNNNNNNNNNNNSNSNSNSNSNSNSNSNSNSNSNS). Coiled-coil stretches lie at residues 228-258 (LQQQQQQQQQQQQQQQQQQQQQQQQQQQQQQ) and 330-407 (QQLQ…QQQQ). The segment at 461-516 (LQLPTPFYSPQQQQQQHTPISSFIPPPSLPSSPPSPPSPPSPPPQQQQQQQQQQQQ) is disordered. Positions 484–505 (IPPPSLPSSPPSPPSPPSPPPQ) are enriched in pro residues. The segment covering 506–516 (QQQQQQQQQQQ) has biased composition (low complexity). Residues 557–620 (ESKESIKKYN…SIEMMRMEPE (64 aa)) enclose the bZIP domain. The interval 559–564 (KESIKK) is basic motif. The leucine-zipper stretch occupies residues 569-576 (IASRNYRL).

The protein belongs to the bZIP family.

Its subcellular location is the nucleus. Functionally, probable transcriptional regulator. This Dictyostelium discoideum (Social amoeba) protein is Probable basic-leucine zipper transcription factor R (bzpR).